We begin with the raw amino-acid sequence, 234 residues long: Probable RNA/DNA demethylase ALKBH6 (234 aa).

A Fe2OG dioxygenase domain is found at threonine 96 to proline 222. 2-oxoglutarate contacts are provided by asparagine 103 and tyrosine 105. 3 residues coordinate Fe cation: histidine 114, aspartate 116, and histidine 180. 2-oxoglutarate contacts are provided by arginine 213 and serine 215.

Belongs to the alkB family. Fe(2+) is required as a cofactor.

It is found in the cytoplasm. The protein localises to the nucleus. Probable Fe(2+)/2-oxoglutarate-dependent dioxygenase involved in oxidative demethylation of nucleic acids. Binds nucleic acids with a preference for ssDNA or ssRNA to other types of DNAs. May play a role in nucleic acid damage repair. This chain is Probable RNA/DNA demethylase ALKBH6 (alkbh6), found in Danio rerio (Zebrafish).